Reading from the N-terminus, the 129-residue chain is Cuticle protein 12.5 (129 aa).

Repeat copies occupy residues Ala7–Ala10, Ala15–Ala18, Ala23–Ala26, Ala28–Val31, Ala37–Ala40, Ala67–Ala70, Ala79–Ala82, Ala91–Ala94, Ala103–Ala106, and Ala117–Ala120.

In terms of biological role, component of the cuticle of migratory locust which contains more than 100 different structural proteins. The sequence is that of Cuticle protein 12.5 from Locusta migratoria (Migratory locust).